A 717-amino-acid chain; its full sequence is Fatty acid oxidation complex subunit alpha (717 aa).

Positions 1–190 are enoyl-CoA hydratase/isomerase; it reads MIHAGNAITV…KDGAVDAVVA (190 aa). Substrate is bound at residue Asp298. A 3-hydroxyacyl-CoA dehydrogenase region spans residues 313 to 717; the sequence is HPVNQAAVLG…MAANNKKFYG (405 aa). NAD(+)-binding positions include Met326, Asp345, 402-404, Lys409, and Ser431; that span reads VTE. The For 3-hydroxyacyl-CoA dehydrogenase activity role is filled by His452. Position 455 (Asn455) interacts with NAD(+). Asn502 serves as a coordination point for substrate.

It in the N-terminal section; belongs to the enoyl-CoA hydratase/isomerase family. This sequence in the C-terminal section; belongs to the 3-hydroxyacyl-CoA dehydrogenase family. As to quaternary structure, heterotetramer of two alpha chains (FadB) and two beta chains (FadA).

The enzyme catalyses a (3S)-3-hydroxyacyl-CoA + NAD(+) = a 3-oxoacyl-CoA + NADH + H(+). It catalyses the reaction a (3S)-3-hydroxyacyl-CoA = a (2E)-enoyl-CoA + H2O. The catalysed reaction is a 4-saturated-(3S)-3-hydroxyacyl-CoA = a (3E)-enoyl-CoA + H2O. It carries out the reaction (3S)-3-hydroxybutanoyl-CoA = (3R)-3-hydroxybutanoyl-CoA. The enzyme catalyses a (3Z)-enoyl-CoA = a 4-saturated (2E)-enoyl-CoA. It catalyses the reaction a (3E)-enoyl-CoA = a 4-saturated (2E)-enoyl-CoA. The protein operates within lipid metabolism; fatty acid beta-oxidation. Functionally, involved in the aerobic and anaerobic degradation of long-chain fatty acids via beta-oxidation cycle. Catalyzes the formation of 3-oxoacyl-CoA from enoyl-CoA via L-3-hydroxyacyl-CoA. It can also use D-3-hydroxyacyl-CoA and cis-3-enoyl-CoA as substrate. The protein is Fatty acid oxidation complex subunit alpha of Acinetobacter baumannii (strain ACICU).